The following is a 695-amino-acid chain: Elongation factor G (695 aa).

Residues 12 to 286 (DKLRNIGIMA…AVIDYLPSPL (275 aa)) form the tr-type G domain. Residues 21–28 (AHIDAGKT), 85–89 (DTPGH), and 139–142 (NKMD) each bind GTP.

This sequence belongs to the TRAFAC class translation factor GTPase superfamily. Classic translation factor GTPase family. EF-G/EF-2 subfamily.

The protein resides in the cytoplasm. In terms of biological role, catalyzes the GTP-dependent ribosomal translocation step during translation elongation. During this step, the ribosome changes from the pre-translocational (PRE) to the post-translocational (POST) state as the newly formed A-site-bound peptidyl-tRNA and P-site-bound deacylated tRNA move to the P and E sites, respectively. Catalyzes the coordinated movement of the two tRNA molecules, the mRNA and conformational changes in the ribosome. The chain is Elongation factor G from Thermotoga sp. (strain RQ2).